The primary structure comprises 143 residues: UPF0260 protein plu2141 (143 aa).

The protein belongs to the UPF0260 family.

The sequence is that of UPF0260 protein plu2141 from Photorhabdus laumondii subsp. laumondii (strain DSM 15139 / CIP 105565 / TT01) (Photorhabdus luminescens subsp. laumondii).